Reading from the N-terminus, the 805-residue chain is Leucine--tRNA ligase (805 aa).

A 'HIGH' region motif is present at residues 40 to 51; the sequence is PYPSGAGLHVGH. The 'KMSKS' region signature appears at 576–580; that stretch reads KMSKS. Position 579 (lysine 579) interacts with ATP.

It belongs to the class-I aminoacyl-tRNA synthetase family.

It localises to the cytoplasm. It catalyses the reaction tRNA(Leu) + L-leucine + ATP = L-leucyl-tRNA(Leu) + AMP + diphosphate. In Geobacillus kaustophilus (strain HTA426), this protein is Leucine--tRNA ligase.